The following is a 211-amino-acid chain: ATP-dependent dethiobiotin synthetase BioD (211 aa).

Position 13–18 (13–18 (GVGKTV)) interacts with ATP. Thr-17 provides a ligand contact to Mg(2+). Lys-33 is a catalytic residue. Mg(2+)-binding residues include Cys-47 and Glu-101. ATP-binding positions include 101 to 104 (EGAG), 185 to 187 (PWL), and Asn-192.

The protein belongs to the dethiobiotin synthetase family. As to quaternary structure, homodimer. The cofactor is Mg(2+).

The protein localises to the cytoplasm. It carries out the reaction (7R,8S)-7,8-diammoniononanoate + CO2 + ATP = (4R,5S)-dethiobiotin + ADP + phosphate + 3 H(+). It participates in cofactor biosynthesis; biotin biosynthesis; biotin from 7,8-diaminononanoate: step 1/2. Functionally, catalyzes a mechanistically unusual reaction, the ATP-dependent insertion of CO2 between the N7 and N8 nitrogen atoms of 7,8-diaminopelargonic acid (DAPA, also called 7,8-diammoniononanoate) to form a ureido ring. The protein is ATP-dependent dethiobiotin synthetase BioD of Bradyrhizobium diazoefficiens (strain JCM 10833 / BCRC 13528 / IAM 13628 / NBRC 14792 / USDA 110).